Consider the following 106-residue polypeptide: ATP-dependent Clp protease adapter protein ClpS (106 aa).

Belongs to the ClpS family. As to quaternary structure, binds to the N-terminal domain of the chaperone ClpA.

Functionally, involved in the modulation of the specificity of the ClpAP-mediated ATP-dependent protein degradation. The polypeptide is ATP-dependent Clp protease adapter protein ClpS (Vibrio cholerae serotype O1 (strain ATCC 39541 / Classical Ogawa 395 / O395)).